Reading from the N-terminus, the 243-residue chain is MNLYLDIGNTNLKFGYEIENQFHFYTLPTLENYTCDMLSKNLESFIKKQKFNYLIVSSVVPSLNLVIKDFASIHLKSKVMFIDKIKKEILNLNGREHSSIGSDIIANALYVSSRYEDAIVISLGTATVIFHVVSKRLEGAIIAPGVKNSYLSLIQSAKKLSEVILKLPRKNLGGNTQEAISLGILKGNFHLINGFINELDPKGKSKILITGGNYGMLKDVLKDYEYVDNMVILGLKDYYEIFK.

6–13 (DIGNTNLK) is an ATP binding site. 101 to 104 (GSDI) serves as a coordination point for substrate. The active-site Proton acceptor is D103. T125 contributes to the ATP binding site. T176 contributes to the substrate binding site.

It belongs to the type III pantothenate kinase family. In terms of assembly, homodimer. NH4(+) is required as a cofactor. K(+) serves as cofactor.

The protein localises to the cytoplasm. The catalysed reaction is (R)-pantothenate + ATP = (R)-4'-phosphopantothenate + ADP + H(+). It functions in the pathway cofactor biosynthesis; coenzyme A biosynthesis; CoA from (R)-pantothenate: step 1/5. Its function is as follows. Catalyzes the phosphorylation of pantothenate (Pan), the first step in CoA biosynthesis. The sequence is that of Type III pantothenate kinase from Mycoplasma mobile (strain ATCC 43663 / 163K / NCTC 11711) (Mesomycoplasma mobile).